A 127-amino-acid chain; its full sequence is Fluoride-specific ion channel FluC (127 aa).

A run of 4 helical transmembrane segments spans residues 4–24, 35–55, 71–91, and 103–123; these read LLLA…FLSM, LGTL…LAWF, TGFC…VFLL, and IAVN…LFSA. 2 residues coordinate Na(+): glycine 75 and threonine 78.

This sequence belongs to the fluoride channel Fluc/FEX (TC 1.A.43) family.

It localises to the cell inner membrane. The enzyme catalyses fluoride(in) = fluoride(out). Its activity is regulated as follows. Na(+) is not transported, but it plays an essential structural role and its presence is essential for fluoride channel function. Fluoride-specific ion channel. Important for reducing fluoride concentration in the cell, thus reducing its toxicity. The sequence is that of Fluoride-specific ion channel FluC from Enterobacter sp. (strain 638).